Reading from the N-terminus, the 859-residue chain is Leucine--tRNA ligase (859 aa).

A 'HIGH' region motif is present at residues 42–52 (PYPSGRLHMGH). The 'KMSKS' region signature appears at 618–622 (KMSKS). Lys-621 contributes to the ATP binding site.

This sequence belongs to the class-I aminoacyl-tRNA synthetase family.

It is found in the cytoplasm. It carries out the reaction tRNA(Leu) + L-leucine + ATP = L-leucyl-tRNA(Leu) + AMP + diphosphate. The protein is Leucine--tRNA ligase of Shewanella pealeana (strain ATCC 700345 / ANG-SQ1).